The following is a 124-amino-acid chain: UPF0102 protein HCH_05895 (124 aa).

This sequence belongs to the UPF0102 family.

The chain is UPF0102 protein HCH_05895 from Hahella chejuensis (strain KCTC 2396).